A 351-amino-acid chain; its full sequence is Putative aminodehydroquinate synthase (351 aa).

NAD(+) is bound by residues 65–68 (EPTK), 97–101 (GTTTD), 121–122 (TS), K134, K143, and 161–164 (YLTT). Positions 176, 225, and 241 each coordinate Zn(2+).

It belongs to the sugar phosphate cyclases superfamily. aDHQS family. It depends on NAD(+) as a cofactor. Co(2+) is required as a cofactor. The cofactor is Zn(2+).

May catalyze the conversion of 3,4-dideoxy-4-amino-D-arabino-heptulosonate 7-phosphate (aDAHP) to 5-deoxy-5-amino-3-dehydroquinate (aDHQ). Probably involved in the formation of 3-amino-5-hydroxybenzoic acid (AHBA), the precursor of rifamycin and related ansamycins. This chain is Putative aminodehydroquinate synthase, found in Amycolatopsis mediterranei (strain S699) (Nocardia mediterranei).